A 111-amino-acid polypeptide reads, in one-letter code: uncharacterized protein (111 aa).

Transmembrane regions (helical) follow at residues 29–49 (LLNF…ATAV) and 52–72 (ACFA…YLLA).

The protein localises to the membrane. This is an uncharacterized protein from Saccharomyces cerevisiae (strain ATCC 204508 / S288c) (Baker's yeast).